The following is a 443-amino-acid chain: DNA double-strand break repair protein Mre11 (443 aa).

Residues aspartate 8, histidine 10, aspartate 49, and asparagine 84 each coordinate Mn(2+). Catalysis depends on histidine 85, which acts as the Proton donor. Histidine 169, histidine 201, and histidine 203 together coordinate Mn(2+). The disordered stretch occupies residues 382–429; that stretch reads QEEGAEERVVEEETEKKVEEQFKGDEEADEAERRAEETEKAKSTKKAR. The span at 395-423 shows a compositional bias: basic and acidic residues; that stretch reads TEKKVEEQFKGDEEADEAERRAEETEKAK.

Belongs to the MRE11/RAD32 family. As to quaternary structure, homodimer. Forms a heterotetramer composed of two Mre11 subunits and two Rad50 subunits. It depends on Mn(2+) as a cofactor.

Nuclease activity is regulated by Rad50. Part of the Rad50/Mre11 complex, which is involved in the early steps of DNA double-strand break (DSB) repair. The complex may facilitate opening of the processed DNA ends to aid in the recruitment of HerA and NurA. Mre11 binds to DSB ends and has both double-stranded 3'-5' exonuclease activity and single-stranded endonuclease activity. This chain is DNA double-strand break repair protein Mre11, found in Archaeoglobus fulgidus (strain ATCC 49558 / DSM 4304 / JCM 9628 / NBRC 100126 / VC-16).